An 812-amino-acid polypeptide reads, in one-letter code: Valine--tRNA ligase (812 aa).

Positions 46–56 (PTVSGQLHIGH) match the 'HIGH' region motif. A 'KMSKS' region motif is present at residues 536 to 540 (KMSKS). Lysine 539 is an ATP binding site.

Belongs to the class-I aminoacyl-tRNA synthetase family. ValS type 2 subfamily. In terms of assembly, monomer.

It is found in the cytoplasm. It catalyses the reaction tRNA(Val) + L-valine + ATP = L-valyl-tRNA(Val) + AMP + diphosphate. Catalyzes the attachment of valine to tRNA(Val). As ValRS can inadvertently accommodate and process structurally similar amino acids such as threonine, to avoid such errors, it has a 'posttransfer' editing activity that hydrolyzes mischarged Thr-tRNA(Val) in a tRNA-dependent manner. In Rickettsia conorii (strain ATCC VR-613 / Malish 7), this protein is Valine--tRNA ligase.